The primary structure comprises 432 residues: UPF0761 membrane protein Cag_0935 (432 aa).

A run of 6 helical transmembrane segments spans residues Leu-52–Phe-72, Asn-108–Val-128, Phe-148–Ala-168, Leu-190–Val-210, Ala-220–Phe-240, and Ala-254–Val-274.

The protein belongs to the UPF0761 family.

It localises to the cell inner membrane. This Chlorobium chlorochromatii (strain CaD3) protein is UPF0761 membrane protein Cag_0935.